We begin with the raw amino-acid sequence, 321 residues long: uncharacterized protein (321 aa).

At 1 to 6 (MDIIRK) the chain is on the extracellular side. A helical membrane pass occupies residues 7-29 (ISHFAGQTFGIWVIVFAVLGFSF). The Cytoplasmic portion of the chain corresponds to 30–34 (PSLFT). The chain crosses the membrane as a helical span at residues 35-57 (WISSYITIFLGIIMFGMGLTLQA). Residues 58–69 (DDFKELVRKPWQ) lie on the Extracellular side of the membrane. Residues 70–92 (VIIGVIAQYTIMPLVAFGLAFGL) form a helical membrane-spanning segment. Over 93–97 (HLPAE) the chain is Cytoplasmic. The helical transmembrane segment at 98–120 (IAVGVILVGCCPGGTASNVMTFL) threads the bilayer. Over 121–129 (AKGNTALSV) the chain is Extracellular. The helical transmembrane segment at 130–150 (AVTTISTLLAPVVTPLLIMLF) threads the bilayer. Residues 151–159 (AKEWLPVSP) are Cytoplasmic-facing. A helical membrane pass occupies residues 160-180 (GSLFISILQAVLFPIIAGLIV). The Extracellular portion of the chain corresponds to 181–190 (KMFFRKQVAK). A helical membrane pass occupies residues 191–211 (AVHALPLVSVIGIVAIVSAVV). Residues 212 to 221 (SGNRENLLQS) lie on the Cytoplasmic side of the membrane. The helical transmembrane segment at 222–242 (GLLIFSVVILHNGIGYLLGFL) threads the bilayer. Topologically, residues 243–267 (CAKLLKMDYPSQKAIAIEVGMQNSG) are extracellular. A helical membrane pass occupies residues 268 to 288 (LGAALATAHFSPLSAVPSAIF). Residues 289-321 (SVWHNLSGSMLATYWSKKVKKKQAGSKSSNLSL) lie on the Cytoplasmic side of the membrane.

The protein belongs to the bile acid:sodium symporter (BASS) (TC 2.A.28) family.

It localises to the cell membrane. This is an uncharacterized protein from Bacillus subtilis (strain 168).